The primary structure comprises 95 residues: MSFTFQTEVRADLGKGASRRLRRAEQVPAILYGAGQEAVSLVLDHNKVITAQQEAAFYSEVLTLVVDGKEVKVKVAAVQRHPVKPKVVHLDFIRA.

Belongs to the bacterial ribosomal protein bL25 family. Part of the 50S ribosomal subunit; part of the 5S rRNA/L5/L18/L25 subcomplex. Contacts the 5S rRNA. Binds to the 5S rRNA independently of L5 and L18.

Functionally, this is one of the proteins that binds to the 5S RNA in the ribosome where it forms part of the central protuberance. The polypeptide is Large ribosomal subunit protein bL25 (Tolumonas auensis (strain DSM 9187 / NBRC 110442 / TA 4)).